The following is a 141-amino-acid chain: NADPH-dependent 7-cyano-7-deazaguanine reductase (141 aa).

The active-site Thioimide intermediate is Cys56. Asp63 acts as the Proton donor in catalysis. Substrate is bound by residues 78–80 and 97–98; these read VEL and HE.

It belongs to the GTP cyclohydrolase I family. QueF type 1 subfamily.

The protein localises to the cytoplasm. It catalyses the reaction 7-aminomethyl-7-carbaguanine + 2 NADP(+) = 7-cyano-7-deazaguanine + 2 NADPH + 3 H(+). The protein operates within tRNA modification; tRNA-queuosine biosynthesis. Its function is as follows. Catalyzes the NADPH-dependent reduction of 7-cyano-7-deazaguanine (preQ0) to 7-aminomethyl-7-deazaguanine (preQ1). This chain is NADPH-dependent 7-cyano-7-deazaguanine reductase, found in Trichodesmium erythraeum (strain IMS101).